The following is a 155-amino-acid chain: Molybdopterin synthase catalytic subunit 1 (155 aa).

Substrate is bound by residues 101–102, lysine 117, and 124–126; these read HR and KKE.

The protein belongs to the MoaE family. MOCS2B subfamily. As to quaternary structure, heterotetramer; composed of 2 small (MOCS2A) and 2 large (MOCS2B) subunits.

The protein localises to the cytoplasm. The enzyme catalyses 2 [molybdopterin-synthase sulfur-carrier protein]-C-terminal-Gly-aminoethanethioate + cyclic pyranopterin phosphate + H2O = molybdopterin + 2 [molybdopterin-synthase sulfur-carrier protein]-C-terminal Gly-Gly + 2 H(+). Its pathway is cofactor biosynthesis; molybdopterin biosynthesis. Functionally, catalytic subunit of the molybdopterin synthase complex, a complex that catalyzes the conversion of precursor Z into molybdopterin. Acts by mediating the incorporation of 2 sulfur atoms from thiocarboxylated MOCS2A into precursor Z to generate a dithiolene group. This Aedes aegypti (Yellowfever mosquito) protein is Molybdopterin synthase catalytic subunit 1.